Consider the following 431-residue polypeptide: STE20-related kinase adapter protein alpha (431 aa).

2 positions are modified to phosphoserine: Ser-2 and Ser-46. Disordered regions lie at residues 32–52 (EQPP…SIAS) and 314–344 (PSRS…SHPY). The region spanning 69–379 (YELLTIIGKG…ASTLLNHSFF (311 aa)) is the Protein kinase domain. The residue at position 419 (Thr-419) is a Phosphothreonine; by LKB1.

The protein belongs to the protein kinase superfamily. STE Ser/Thr protein kinase family. STE20 subfamily. In terms of assembly, component of a trimeric complex composed of STK11/LKB1, STRAD (STRADA or STRADB) and CAB39/MO25 (CAB39/MO25alpha or CAB39L/MO25beta): the complex tethers STK11/LKB1 in the cytoplasm and stimulates its catalytic activity.

The protein localises to the nucleus. It localises to the cytoplasm. Functionally, pseudokinase which, in complex with CAB39/MO25 (CAB39/MO25alpha or CAB39L/MO25beta), binds to and activates STK11/LKB1. Adopts a closed conformation typical of active protein kinases and binds STK11/LKB1 as a pseudosubstrate, promoting conformational change of STK11/LKB1 in an active conformation. The polypeptide is STE20-related kinase adapter protein alpha (Strada) (Mus musculus (Mouse)).